A 217-amino-acid polypeptide reads, in one-letter code: D-methionine transport system permease protein MetI (217 aa).

Residues 1 to 19 lie on the Periplasmic side of the membrane; it reads MSEPMMWLLVRGVWETLAM. Residues 13-204 form the ABC transmembrane type-1 domain; that stretch reads VWETLAMTFV…LLVILVYLIQ (192 aa). The chain crosses the membrane as a helical span at residues 20–40; it reads TFVSGFFGFVVGLPVGVLLYV. At 41–57 the chain is on the cytoplasmic side; that stretch reads TRPGQIIANAKLYRTVS. A helical membrane pass occupies residues 58–78; the sequence is AIVNIFRSIPFIILLVWMIPF. Over 79 to 80 the chain is Periplasmic; sequence TR. Residues 81–101 traverse the membrane as a helical segment; that stretch reads VIVGTSIGLQAAIVPLTVGAA. The Cytoplasmic segment spans residues 102–151; it reads PFIARMVENALLEIPTGLIEASRAMGATPMQIVRKVLLPEALPGLVNAAT. A helical membrane pass occupies residues 152 to 172; it reads ITLITLVGYSAMGGAVGAGGL. The Periplasmic segment spans residues 173–185; it reads GQIGYQYGYIGYN. The chain crosses the membrane as a helical span at residues 186 to 206; that stretch reads ATVMNTVLVLLVILVYLIQFA. At 207–217 the chain is on the cytoplasmic side; sequence GDRIVRAVTRK.

It belongs to the binding-protein-dependent transport system permease family. CysTW subfamily.

It localises to the cell inner membrane. Its function is as follows. Part of the binding-protein-dependent transport system for D-methionine and the toxic methionine analog alpha-methyl-methionine. Probably responsible for the translocation of the substrate across the membrane. The polypeptide is D-methionine transport system permease protein MetI (metI) (Escherichia coli O157:H7).